A 395-amino-acid polypeptide reads, in one-letter code: Extracellular cysteine protease (395 aa).

The first 30 residues, M1–A30, serve as a signal peptide directing secretion. A propeptide spanning residues D31 to E221 is cleaved from the precursor. Residues C245, H341, and N362 contribute to the active site.

It belongs to the peptidase C47 family. Post-translationally, proteolytically cleaved.

The protein localises to the secreted. It is found in the cell wall. Cysteine protease able to cleave elastin, insulin, myoglobin, fibronectin, fibrinogen, HMW-kininogen, alpha-1-protease inhibitor and alpha-1-antitrypsin. Along with other extracellular proteases may contribute to the colonization and infection of human tissues. The chain is Extracellular cysteine protease (ecpA) from Staphylococcus epidermidis (strain ATCC 35984 / DSM 28319 / BCRC 17069 / CCUG 31568 / BM 3577 / RP62A).